A 613-amino-acid polypeptide reads, in one-letter code: Envelope glycoprotein gp95 (613 aa).

Residues 1-62 (MEAVIKAVLT…VLCEVTGVRA (62 aa)) form the signal peptide. The disordered stretch occupies residues 14-36 (GETSKKDSKKKPPATSKKDPEKT). Residues 63 to 559 (DVHLLEQPGN…EWAVHLLKGL (497 aa)) are Extracellular-facing. 7 disulfides stabilise this stretch: C87-C506, C121-C151, C191-C252, C265-C275, C360-C377, C417-C453, and C498-C505. N120, N140, N157, N177, N230, N264, N271, N297, N303, N313, and N321 each carry an N-linked (GlcNAc...) asparagine; by host glycan. The binding to host receptor stretch occupies residues 184–233 (IPSVAGGCIGFTPYDSPAGVYGWDRREVTHILLTDPGNNPFFDKASNSSK). Residues 268-294 (MRQNWSICQDVWGRGPPENWCTSTGGT) form a binding to host receptor region. Residues N388 and N398 are each glycosylated (N-linked (GlcNAc...) asparagine; by host). Residues 425–445 (GPTARIFASILAPGVAAAQAL) form a fusion peptide region. A glycan (N-linked (GlcNAc...) asparagine; by host) is linked at N460. The segment at 481–497 (LQNRAAIDFLLLAHGHG) is immunosuppression. N508 is a glycosylation site (N-linked (GlcNAc...) asparagine; by host). A helical membrane pass occupies residues 560-580 (LLGLVVILLLVVCLPCLLQIV). 2 S-palmitoyl cysteine; by host lipidation sites follow: C572 and C575. Over 581-613 (CGNIRKMINNSISYHTEYKKLQKAYGQPESRIV) the chain is Extracellular. Residue N589 is glycosylated (N-linked (GlcNAc...) asparagine; by host).

It belongs to the Alpharetroviruses envelope glycoprotein family. Heterodimer with the transmembrane protein. The mature envelope protein (Env) consists of a trimer of SU-TM heterodimers attached by a labile interchain disulfide bond. Interacts with the host cell entry receptor TVB-S3; this interaction allows the viral attachment. As to quaternary structure, heterodimer with the surface protein. The mature envelope protein (Env) consists of a trimer of SU-TM heterodimers attached by a labile interchain disulfide bond. In terms of processing, specific enzymatic cleavages in vivo yield mature proteins. Envelope glycoproteins are synthesized as an inactive precursor that is N-glycosylated and processed likely by host cell furin or by a furin-like protease in the Golgi to yield the mature SU and TM proteins. The cleavage site between SU and TM requires the minimal sequence [KR]-X-[KR]-R. Post-translationally, the transmembrane protein is palmitoylated. Palmitoylation is necessary for glycoprotein function and infectivity.

The protein localises to the virion membrane. It is found in the host cell membrane. Its function is as follows. The surface protein (SU) attaches the virus to the host cell entry receptor TVB-S3/CAR1. This interaction triggers the refolding of the transmembrane protein (TM) thereby unmasking its fusion peptide and the formation of a reactive thiolate on Cys-100 to activate its fusogenic potential. Fusion occurs at the host cell plasma membrane. The transmembrane protein (TM) acts as a class I viral fusion protein. Under the current model, the protein has at least 3 conformational states: pre-fusion native state, pre-hairpin intermediate state, and post-fusion hairpin state. During viral and target cell membrane fusion, the coiled coil regions (heptad repeats) assume a trimer-of-hairpins structure, positioning the fusion peptide in close proximity to the C-terminal region of the ectodomain. The formation of this structure appears to drive apposition and subsequent fusion of viral and target cell membranes. Membranes fusion leads to delivery of the nucleocapsid into the cytoplasm. The polypeptide is Envelope glycoprotein gp95 (env) (Rous sarcoma virus subgroup B (strain Schmidt-Ruppin) (RSV-SR-B)).